The following is a 612-amino-acid chain: DNA damage checkpoint protein 1 (612 aa).

The residue at position 436 (serine 436) is a Phosphoserine. Residues 576–612 (GLLNSQNDTSNHKKQDNKEMEDGLGLTQVEKPRGIFD) are disordered. Positions 585–596 (SNHKKQDNKEME) are enriched in basic and acidic residues.

This sequence belongs to the DDC1 family. Component of the checkpoint clamp complex composed of DDC1, MEC3 and RAD17. The interaction with MEC3 is performed in a RAD17-dependent manner. The checkpoint clamp complex loads onto DNA in an ATP-dependent manner through its interaction with the RFC-RAD4 checkpoint clamp loader complex. Interacts with the DNA polymerase zeta subunit REV7 and DPB11. In terms of processing, phosphorylated during cell cycle S-phase and in response to DNA damage. This phosphorylation is MEC14 dependent. Also hosphorylated by CDC28.

The protein resides in the cytoplasm. It is found in the nucleus. Component of the checkpoint clamp complex involved in the surveillance mechanism that allows the DNA repair pathways to act to restore the integrity of the DNA prior to DNA synthesis or separation of the replicated chromosomes. Associates with sites of DNA damage and modulates the MEC1 signaling pathway and the activation of RAD53 in response to DNA damage at phase G1. The complex also physically regulates DNA polymerase zeta-dependent mutagenesis by controlling the access of polymerase zeta to damaged DNA. This is DNA damage checkpoint protein 1 (DDC1) from Saccharomyces cerevisiae (strain ATCC 204508 / S288c) (Baker's yeast).